The following is a 246-amino-acid chain: Zinc import ATP-binding protein ZnuC (246 aa).

Residues 24 to 243 (LKIENLALAY…RTLNEIFSSY (220 aa)) form the ABC transporter domain. 56–63 (GPNGGGKT) is a binding site for ATP.

This sequence belongs to the ABC transporter superfamily. Zinc importer (TC 3.A.1.15.5) family. As to quaternary structure, the complex is composed of two ATP-binding proteins (ZnuC), two transmembrane proteins (ZnuB) and a solute-binding protein (ZnuA).

The protein localises to the cell membrane. The catalysed reaction is Zn(2+)(out) + ATP(in) + H2O(in) = Zn(2+)(in) + ADP(in) + phosphate(in) + H(+)(in). Part of the ABC transporter complex ZnuABC involved in zinc import. Responsible for energy coupling to the transport system. This chain is Zinc import ATP-binding protein ZnuC, found in Wolbachia pipientis wMel.